The chain runs to 1113 residues: Nucleoporin NUP116/NSP116 (1113 aa).

Residues 1–35 form a disordered region; it reads MFGVSRGAFPSATTQPFGSTGSTFGGQQQQQQPVA. 4 FG repeats span residues 2 to 3, 17 to 18, 24 to 25, and 40 to 41; these read FG. Positions 13 to 33 are enriched in low complexity; sequence TTQPFGSTGSTFGGQQQQQQP. The disordered stretch occupies residues 49 to 91; sequence TQAPAFGNFGNQTSNSPFGMSGSTTANGTPFGQSQLTNNNASG. The stretch at 55–58 is one GLFG 1; approximate repeat; sequence GNFG. FG repeat units follow at residues 66–67, 79–80, and 94–95; these read FG. Positions 92-172 are interaction with AFG2; the sequence is SIFGGMGNNT…AGRKFGTSQN (81 aa). Positions 110 to 166 are GLE2 binding sequence (GLEBS); sequence VVPNSTAGTSIKPFTTFEEKDPTTGVINVFQSITCMPEYRNFSFEELRFQDYQAGRK. The interaction with MEX67, not KAP95 stretch occupies residues 160–362; that stretch reads DYQAGRKFGT…AKPASGGLFG (203 aa). FG repeat units lie at residues 167–168 and 189–190; these read FG. The stretch at 205-208 is one GLFG 2 repeat; that stretch reads GLFG. The stretch at 214–217 is one GLFG 3; approximate repeat; that stretch reads GMFG. The GLFG 4; approximate repeat unit spans residues 224 to 227; the sequence is GGFG. The GLFG 5 repeat unit spans residues 235-238; that stretch reads GLFG. One copy of the FG 10 repeat lies at 249-250; the sequence is FG. GLFG repeat units follow at residues 259 to 262, 276 to 279, and 288 to 291; these read GLFG. Low complexity predominate over residues 265-279; sequence TNNPTNGTNNTGLFG. The tract at residues 265–341 is disordered; the sequence is TNNPTNGTNN…SNANANGGAF (77 aa). Positions 280-304 are enriched in polar residues; sequence QQNSNTNGGLFGQQQNSFGANNVSN. One copy of the FG 11 repeat lies at 297 to 298; sequence FG. A GLFG 9; approximate repeat occupies 306 to 309; sequence GAFG. The GLFG 10; approximate repeat unit spans residues 327 to 330; the sequence is GIFG. Residues 330 to 341 show a composition bias toward low complexity; that stretch reads GQSNANANGGAF. The stretch at 339–342 is one GLFG 11; approximate repeat; the sequence is GAFG. An FG 12 repeat occupies 351 to 352; the sequence is FG. One copy of the GLFG 12 repeat lies at 359–362; that stretch reads GLFG. The segment at 362–535 is sufficient for interaction with MEX67 and KAP95; that stretch reads GQSAGSKAFG…GAKPTGFGNT (174 aa). The FG 13 repeat unit spans residues 370–371; the sequence is FG. Residues 371-606 form a disordered region; it reads GMNTNPTGTT…NPASTSGGLF (236 aa). 4 GLFG repeats span residues 382-385, 395-398, 407-410, and 420-423; these read GLFG. The segment covering 410–438 has biased composition (low complexity); sequence GQNNQSQNQSGLFGQQNSSNAFGQPQQQG. One copy of the FG 14 repeat lies at 431–432; that stretch reads FG. GLFG repeat units follow at residues 439–442 and 448–451; these read GLFG. Positions 451 to 464 are enriched in polar residues; sequence GQQQGASTFASGNA. Low complexity-rich tracts occupy residues 465–478 and 485–522; these read QNNS…QQQQ and GQQN…QQNN. One copy of the FG 15 repeat lies at 470-471; sequence FG. 2 GLFG repeats span residues 482 to 485 and 497 to 500; these read GLFG. 3 FG repeats span residues 510–511, 525–526, and 532–533; these read FG. Residues 532 to 569 show a composition bias toward polar residues; the sequence is FGNTSLFSNSTTNQSNGISGNNLQQQSGGLFQNKQQPA. The segment at 536–732 is interaction with KAP95, not MEX67; the sequence is SLFSNSTTNQ…QSQNALQQQQ (197 aa). GLFG repeat units lie at residues 572 to 575, 585 to 588, and 604 to 607; these read GLFG. Polar residues predominate over residues 588–603; it reads GNNQVANQNNPASTSG. Residues 616 to 617 form an FG 19 repeat; that stretch reads FG. Residues 630-633 form a GLFG 24; approximate repeat; it reads GIFG. GLFG repeat units follow at residues 648-651, 665-668, and 683-686; these read GLFG. Residues 678–691 are compositionally biased toward low complexity; the sequence is SNGSTGLFGSNNTS. 2 disordered regions span residues 678 to 736 and 868 to 939; these read SNGS…QQQR and SEEK…ENVA. The segment covering 692–708 has biased composition (polar residues); sequence QSTNAGGLFQNNTSTNT. The span at 719–736 shows a compositional bias: low complexity; the sequence is QSMAQSQNALQQQQQQQR. A Phosphoserine modification is found at Ser886. Basic and acidic residues predominate over residues 916-939; the sequence is NDGEDSATKHHSRNMDEENKENVA. The Peptidase S59 domain occupies 967–1109; that stretch reads NENYYISPSL…GTYVFIVNHA (143 aa). The interaction with NUP82 NPC subcomplex stretch occupies residues 967–1113; the sequence is NENYYISPSL…FIVNHAAEQT (147 aa). Residues 969-1108 form a nucleoporin RNA-binding motif (NRM) region; that stretch reads NYYISPSLDT…SGTYVFIVNH (140 aa).

Belongs to the nucleoporin GLFG family. In terms of assembly, component of the nuclear pore complex (NPC). NPC constitutes the exclusive means of nucleocytoplasmic transport. NPCs allow the passive diffusion of ions and small molecules and the active, nuclear transport receptor-mediated bidirectional transport of macromolecules such as proteins, RNAs, ribonucleoparticles (RNPs), and ribosomal subunits across the nuclear envelope. Due to its 8-fold rotational symmetry, all subunits are present with 8 copies or multiples thereof. NUP116 interacts with the NUP82 subcomplex and GLE2. Through its FG repeats it interacts with numerous karyopherins including KAP95, PSE1 (GSP1-GDP dependent), MEX67, and to homomeric RNA. Interacts with CEX1. Interacts (via N-terminus) with AFG2 (via N-terminus).

It is found in the nucleus. The protein resides in the nuclear pore complex. It localises to the nucleus membrane. In terms of biological role, functions as a component of the nuclear pore complex (NPC). NPC components, collectively referred to as nucleoporins (NUPs), can play the role of both NPC structural components and of docking or interaction partners for transiently associated nuclear transport factors. Active directional transport is assured by both, a Phe-Gly (FG) repeat affinity gradient for these transport factors across the NPC and a transport cofactor concentration gradient across the nuclear envelope (GSP1 and GSP2 GTPases associated predominantly with GTP in the nucleus, with GDP in the cytoplasm). Plays an important role in several nuclear export and import pathways including poly(A)+ RNA, tRNA, pre-ribosome, and protein transport. By binding ATPase AFG2, promotes AFG2-mediated release of shuttling protein RLP24 from pre-60S ribosomal particles. This chain is Nucleoporin NUP116/NSP116 (NUP116), found in Saccharomyces cerevisiae (strain ATCC 204508 / S288c) (Baker's yeast).